The chain runs to 692 residues: Elongation factor G (692 aa).

A tr-type G domain is found at 8–283; sequence NRIRNIGIAA…AVIDYLPAPT (276 aa). Residues 17-24, 81-85, and 135-138 contribute to the GTP site; these read AHIDAGKT, DTPGH, and NKMD.

It belongs to the TRAFAC class translation factor GTPase superfamily. Classic translation factor GTPase family. EF-G/EF-2 subfamily.

The protein localises to the cytoplasm. Catalyzes the GTP-dependent ribosomal translocation step during translation elongation. During this step, the ribosome changes from the pre-translocational (PRE) to the post-translocational (POST) state as the newly formed A-site-bound peptidyl-tRNA and P-site-bound deacylated tRNA move to the P and E sites, respectively. Catalyzes the coordinated movement of the two tRNA molecules, the mRNA and conformational changes in the ribosome. The chain is Elongation factor G from Helicobacter acinonychis (strain Sheeba).